Here is a 130-residue protein sequence, read N- to C-terminus: Small ribosomal subunit protein uS9 (130 aa).

It belongs to the universal ribosomal protein uS9 family.

In Geobacillus sp. (strain WCH70), this protein is Small ribosomal subunit protein uS9.